The sequence spans 396 residues: Inhibitory POU protein (396 aa).

Positions 86-95 match the POU-IV box motif; sequence RAEALAAVDI. The POU-specific domain maps to 222 to 299; sequence DTDTDPRELE…ILQAWLEEAE (78 aa). A disordered region spans residues 302 to 328; sequence AKNKRRDPDAPSVLPAGEKKRKRTSIA. The segment at residues 320–377 is a DNA-binding region (homeobox; atypical); it reads KKRKRTSIAAPEKRSLEAYFAVQPRPSGEKIAAIAEKLDLKKNVVRVWFCNQRQKQKR.

Belongs to the POU transcription factor family. Class-4 subfamily. As to expression, coexpressed with vvl in overlapping subsets of neurons in the embryonic central nervous system. Expressed in olfactory neurons.

The protein localises to the nucleus. In terms of biological role, modulates gene transcription; simultaneously generates both a specific activator and an inhibitor of gene transcription, capable of modulating two distinct regulatory programs during neural development. Has a role in olfactory behavior. This is Inhibitory POU protein (acj6) from Drosophila melanogaster (Fruit fly).